Reading from the N-terminus, the 184-residue chain is Mitochondrial import inner membrane translocase subunit Tim22 (184 aa).

Disulfide bonds link C59-C131 and C150-C169. A run of 3 helical transmembrane segments spans residues A64 to I84, Y115 to V133, and A160 to D180.

Belongs to the Tim17/Tim22/Tim23 family. In terms of assembly, core component of the TIM22 complex.

Its subcellular location is the mitochondrion inner membrane. Functionally, essential core component of the TIM22 complex, a complex that mediates the import and insertion of multi-pass transmembrane proteins into the mitochondrial inner membrane. In the TIM22 complex, it constitutes the voltage-activated and signal-gated channel. Forms a twin-pore translocase that uses the membrane potential as external driving force in 2 voltage-dependent steps. In Xenopus laevis (African clawed frog), this protein is Mitochondrial import inner membrane translocase subunit Tim22 (timm22).